Reading from the N-terminus, the 208-residue chain is Small ribosomal subunit protein uS4 (208 aa).

An S4 RNA-binding domain is found at 98-163 (RRLDNVVYRL…KPRFIEIKEK (66 aa)).

This sequence belongs to the universal ribosomal protein uS4 family. In terms of assembly, part of the 30S ribosomal subunit. Contacts protein S5. The interaction surface between S4 and S5 is involved in control of translational fidelity.

One of the primary rRNA binding proteins, it binds directly to 16S rRNA where it nucleates assembly of the body of the 30S subunit. In terms of biological role, with S5 and S12 plays an important role in translational accuracy. The protein is Small ribosomal subunit protein uS4 of Caldicellulosiruptor saccharolyticus (strain ATCC 43494 / DSM 8903 / Tp8T 6331).